Reading from the N-terminus, the 482-residue chain is Glycogen synthase 2 (482 aa).

Lys18 contacts ADP-alpha-D-glucose.

The protein belongs to the glycosyltransferase 1 family. Bacterial/plant glycogen synthase subfamily.

The catalysed reaction is [(1-&gt;4)-alpha-D-glucosyl](n) + ADP-alpha-D-glucose = [(1-&gt;4)-alpha-D-glucosyl](n+1) + ADP + H(+). It participates in glycan biosynthesis; glycogen biosynthesis. Its function is as follows. Synthesizes alpha-1,4-glucan chains using ADP-glucose. The sequence is that of Glycogen synthase 2 from Bradyrhizobium diazoefficiens (strain JCM 10833 / BCRC 13528 / IAM 13628 / NBRC 14792 / USDA 110).